The chain runs to 218 residues: Probable transaldolase (218 aa).

Lys87 serves as the catalytic Schiff-base intermediate with substrate.

Belongs to the transaldolase family. Type 3B subfamily.

The protein resides in the cytoplasm. It catalyses the reaction D-sedoheptulose 7-phosphate + D-glyceraldehyde 3-phosphate = D-erythrose 4-phosphate + beta-D-fructose 6-phosphate. Its pathway is carbohydrate degradation; pentose phosphate pathway; D-glyceraldehyde 3-phosphate and beta-D-fructose 6-phosphate from D-ribose 5-phosphate and D-xylulose 5-phosphate (non-oxidative stage): step 2/3. Functionally, transaldolase is important for the balance of metabolites in the pentose-phosphate pathway. The sequence is that of Probable transaldolase from Bacteroides fragilis (strain ATCC 25285 / DSM 2151 / CCUG 4856 / JCM 11019 / LMG 10263 / NCTC 9343 / Onslow / VPI 2553 / EN-2).